We begin with the raw amino-acid sequence, 367 residues long: Phosphoribosylaminoimidazole-succinocarboxamide synthase (367 aa).

Belongs to the SAICAR synthetase family.

It carries out the reaction 5-amino-1-(5-phospho-D-ribosyl)imidazole-4-carboxylate + L-aspartate + ATP = (2S)-2-[5-amino-1-(5-phospho-beta-D-ribosyl)imidazole-4-carboxamido]succinate + ADP + phosphate + 2 H(+). It functions in the pathway purine metabolism; IMP biosynthesis via de novo pathway; 5-amino-1-(5-phospho-D-ribosyl)imidazole-4-carboxamide from 5-amino-1-(5-phospho-D-ribosyl)imidazole-4-carboxylate: step 1/2. The polypeptide is Phosphoribosylaminoimidazole-succinocarboxamide synthase (Shewanella pealeana (strain ATCC 700345 / ANG-SQ1)).